A 159-amino-acid polypeptide reads, in one-letter code: NADH-quinone oxidoreductase subunit B (159 aa).

[4Fe-4S] cluster is bound by residues Cys-37, Cys-38, Cys-102, and Cys-132.

The protein belongs to the complex I 20 kDa subunit family. As to quaternary structure, NDH-1 is composed of 14 different subunits. Subunits NuoB, C, D, E, F, and G constitute the peripheral sector of the complex. Requires [4Fe-4S] cluster as cofactor.

Its subcellular location is the cell inner membrane. The catalysed reaction is a quinone + NADH + 5 H(+)(in) = a quinol + NAD(+) + 4 H(+)(out). NDH-1 shuttles electrons from NADH, via FMN and iron-sulfur (Fe-S) centers, to quinones in the respiratory chain. The immediate electron acceptor for the enzyme in this species is believed to be ubiquinone. Couples the redox reaction to proton translocation (for every two electrons transferred, four hydrogen ions are translocated across the cytoplasmic membrane), and thus conserves the redox energy in a proton gradient. This chain is NADH-quinone oxidoreductase subunit B, found in Variovorax paradoxus (strain S110).